A 173-amino-acid polypeptide reads, in one-letter code: NADH-ubiquinone oxidoreductase chain 6 (173 aa).

The next 5 membrane-spanning stretches (helical) occupy residues 1–21, 27–47, 48–68, 87–107, and 139–159; these read MTYF…AVAS, YGVV…LSLG, ISFV…VVFV, VIGY…IGGF, and CGVG…FVVL.

The protein belongs to the complex I subunit 6 family.

It is found in the mitochondrion membrane. The enzyme catalyses a ubiquinone + NADH + 5 H(+)(in) = a ubiquinol + NAD(+) + 4 H(+)(out). Core subunit of the mitochondrial membrane respiratory chain NADH dehydrogenase (Complex I) that is believed to belong to the minimal assembly required for catalysis. Complex I functions in the transfer of electrons from NADH to the respiratory chain. The immediate electron acceptor for the enzyme is believed to be ubiquinone. The protein is NADH-ubiquinone oxidoreductase chain 6 (MT-ND6) of Alca torda (Razorbill).